A 254-amino-acid chain; its full sequence is MGVAVRVIPCLDVDAGRVVKGVNFENLRDAGDPVELAARYDLAGADELTFLDVTASSGERDTMFDVVSRTAETMFVPLTVGGGVRTPQDVDRLLRCGADKASINTAAVERPEVVDEITRRFGSQVLVLSLDARRTGNTASGFEVTTRGGRTLTGLDALQWAREAEERGVGEILLNSMDADGTREGFDLEMISAVREVVGVPLIASGGAGSPEHFPPAVAAGADAVLAASVFHFGPDHAIGDVKAALRAAGHEVR.

Catalysis depends on residues D12 and D131.

Belongs to the HisA/HisF family. Heterodimer of HisH and HisF.

The protein resides in the cytoplasm. The catalysed reaction is 5-[(5-phospho-1-deoxy-D-ribulos-1-ylimino)methylamino]-1-(5-phospho-beta-D-ribosyl)imidazole-4-carboxamide + L-glutamine = D-erythro-1-(imidazol-4-yl)glycerol 3-phosphate + 5-amino-1-(5-phospho-beta-D-ribosyl)imidazole-4-carboxamide + L-glutamate + H(+). It participates in amino-acid biosynthesis; L-histidine biosynthesis; L-histidine from 5-phospho-alpha-D-ribose 1-diphosphate: step 5/9. IGPS catalyzes the conversion of PRFAR and glutamine to IGP, AICAR and glutamate. The HisF subunit catalyzes the cyclization activity that produces IGP and AICAR from PRFAR using the ammonia provided by the HisH subunit. The chain is Imidazole glycerol phosphate synthase subunit HisF from Kocuria rhizophila (strain ATCC 9341 / DSM 348 / NBRC 103217 / DC2201).